A 249-amino-acid polypeptide reads, in one-letter code: Transcription initiation factor TFIID subunit 9B (249 aa).

Methionine 1 is modified (N-acetylmethionine). Position 147 is a phosphoserine (serine 147). The segment at alanine 148–alanine 171 is disordered. At threonine 172 the chain carries Phosphothreonine. Serine 175 bears the Phosphoserine mark. Positions valine 224–asparagine 234 are enriched in polar residues. Positions valine 224–methionine 249 are disordered.

It belongs to the TAF9 family. Binds TAF5 and TAF6. Component of TFIID and the TATA-binding protein-free TAF complex (TFTC). TFIID is composed of TATA binding protein (TBP) and a number of TBP-associated factors (TAFs). Binds N-terminal domain of p53/TP53 which is essential for transcription.

It is found in the nucleus. Essential for cell viability. TAF9 and TAF9B are involved in transcriptional activation as well as repression of distinct but overlapping sets of genes. May have a role in gene regulation associated with apoptosis. TAFs are components of the transcription factor IID (TFIID) complex, the TBP-free TAFII complex (TFTC), the PCAF histone acetylase complex and the STAGA transcription coactivator-HAT complex. TFIID or TFTC are essential for the regulation of RNA polymerase II-mediated transcription. The sequence is that of Transcription initiation factor TFIID subunit 9B (Taf9b) from Mus musculus (Mouse).